The primary structure comprises 268 residues: Deoxyuridine 5'-triphosphate nucleotidohydrolase (268 aa).

Substrate contacts are provided by residues 172-174 and 263-264; these read RSS and FG.

Belongs to the dUTPase family. Mg(2+) is required as a cofactor.

The enzyme catalyses dUTP + H2O = dUMP + diphosphate + H(+). Involved in nucleotide metabolism: produces dUMP, the immediate precursor of thymidine nucleotides and decreases the intracellular concentration of dUTP to avoid uracil incorporation into viral DNA. The chain is Deoxyuridine 5'-triphosphate nucleotidohydrolase from Suid herpesvirus 1 (strain Kaplan) (SuHV-1).